The chain runs to 303 residues: Oxygen-dependent coproporphyrinogen-III oxidase (303 aa).

Serine 93 serves as a coordination point for substrate. A divalent metal cation-binding residues include histidine 97 and histidine 107. Catalysis depends on histidine 107, which acts as the Proton donor. Asparagine 109–arginine 111 is a binding site for substrate. A divalent metal cation contacts are provided by histidine 146 and histidine 176. An important for dimerization region spans residues tyrosine 241–glycine 276. Residue glycine 259–arginine 261 participates in substrate binding.

This sequence belongs to the aerobic coproporphyrinogen-III oxidase family. In terms of assembly, homodimer. Requires a divalent metal cation as cofactor.

The protein localises to the cytoplasm. It carries out the reaction coproporphyrinogen III + O2 + 2 H(+) = protoporphyrinogen IX + 2 CO2 + 2 H2O. The protein operates within porphyrin-containing compound metabolism; protoporphyrin-IX biosynthesis; protoporphyrinogen-IX from coproporphyrinogen-III (O2 route): step 1/1. In terms of biological role, involved in the heme biosynthesis. Catalyzes the aerobic oxidative decarboxylation of propionate groups of rings A and B of coproporphyrinogen-III to yield the vinyl groups in protoporphyrinogen-IX. In Pseudomonas putida (strain ATCC 47054 / DSM 6125 / CFBP 8728 / NCIMB 11950 / KT2440), this protein is Oxygen-dependent coproporphyrinogen-III oxidase.